Consider the following 444-residue polypeptide: Maltoporin (444 aa).

Positions 1–24 (MITLRKVPLALAIAAGILSAQAGA) are cleaved as a signal peptide.

It belongs to the porin LamB (TC 1.B.3) family. As to quaternary structure, homotrimer formed of three 18-stranded antiparallel beta-barrels, containing three independent channels.

The protein localises to the cell outer membrane. It catalyses the reaction beta-maltose(in) = beta-maltose(out). In terms of biological role, involved in the transport of maltose and maltodextrins. This is Maltoporin from Enterobacter sp. (strain 638).